A 389-amino-acid polypeptide reads, in one-letter code: Sulfate adenylyltransferase (389 aa).

This sequence belongs to the sulfate adenylyltransferase family.

It catalyses the reaction sulfate + ATP + H(+) = adenosine 5'-phosphosulfate + diphosphate. It participates in sulfur metabolism; hydrogen sulfide biosynthesis; sulfite from sulfate: step 1/3. In Microcystis aeruginosa (strain NIES-843 / IAM M-2473), this protein is Sulfate adenylyltransferase.